The primary structure comprises 84 residues: Large ribosomal subunit protein bL27 (84 aa).

A disordered region spans residues 1-22 (MAHKKAGGSTRNGRDSESKRLG).

It belongs to the bacterial ribosomal protein bL27 family.

The sequence is that of Large ribosomal subunit protein bL27 from Shewanella frigidimarina (strain NCIMB 400).